The sequence spans 105 residues: TMEM14 protein homolog YJR085C (105 aa).

Transmembrane regions (helical) follow at residues 26–46, 53–73, and 77–97; these read IPSLVSGLVFGSVYGIAGYLL, GLEMALGASTLLLGAGVIRGM, and FTKPVPVVLTALGGLGSYYYY.

It belongs to the TMEM14 family.

The protein localises to the mitochondrion. It localises to the membrane. The protein is TMEM14 protein homolog YJR085C of Saccharomyces cerevisiae (strain ATCC 204508 / S288c) (Baker's yeast).